The chain runs to 133 residues: Small ribosomal subunit protein uS8 (133 aa).

The disordered stretch occupies residues 1–28 (MANHDPISDMLTRIRNASEKRHEKTKVP). Over residues 16–26 (NASEKRHEKTK) the composition is skewed to basic and acidic residues.

This sequence belongs to the universal ribosomal protein uS8 family. In terms of assembly, part of the 30S ribosomal subunit. Contacts proteins S5 and S12.

Functionally, one of the primary rRNA binding proteins, it binds directly to 16S rRNA central domain where it helps coordinate assembly of the platform of the 30S subunit. This chain is Small ribosomal subunit protein uS8, found in Prochlorococcus marinus (strain NATL1A).